We begin with the raw amino-acid sequence, 651 residues long: Acetyl-coenzyme A synthetase 1 (651 aa).

CoA contacts are provided by residues 191–194 (RGGK), threonine 311, and asparagine 335. ATP is bound by residues 387 to 389 (GEP), 411 to 416 (DTWWQT), aspartate 500, and arginine 515. Residue serine 523 participates in CoA binding. Arginine 526 is a binding site for ATP. The Mg(2+) site is built by valine 537, histidine 539, and valine 542. Arginine 584 provides a ligand contact to CoA. An N6-acetyllysine modification is found at lysine 609.

The protein belongs to the ATP-dependent AMP-binding enzyme family. Mg(2+) is required as a cofactor. In terms of processing, acetylated. Deacetylation by the SIR2-homolog deacetylase activates the enzyme.

It carries out the reaction acetate + ATP + CoA = acetyl-CoA + AMP + diphosphate. Its function is as follows. Catalyzes the conversion of acetate into acetyl-CoA (AcCoA), an essential intermediate at the junction of anabolic and catabolic pathways. AcsA undergoes a two-step reaction. In the first half reaction, AcsA combines acetate with ATP to form acetyl-adenylate (AcAMP) intermediate. In the second half reaction, it can then transfer the acetyl group from AcAMP to the sulfhydryl group of CoA, forming the product AcCoA. This chain is Acetyl-coenzyme A synthetase 1, found in Pseudomonas aeruginosa (strain ATCC 15692 / DSM 22644 / CIP 104116 / JCM 14847 / LMG 12228 / 1C / PRS 101 / PAO1).